A 1608-amino-acid polypeptide reads, in one-letter code: Mitogen-activated protein kinase kinase kinase 4 (1608 aa).

Positions 1–23 are enriched in low complexity; it reads MREAAAALVPPPAFAVTPAAAME. 2 disordered regions span residues 1 to 136 and 429 to 478; these read MREA…ENVE and IPSP…RQPI. The span at 24 to 37 shows a compositional bias: pro residues; the sequence is EPPPPPPPPPPPPE. The segment covering 66–76 has biased composition (acidic residues); the sequence is SDLEDFSDETN. S84 is subject to Phosphoserine. Residues 91–101 show a composition bias toward basic residues; sequence QMKRMSTKHQR. S431 is subject to Phosphoserine. Phosphothreonine is present on T447. 2 positions are modified to phosphoserine: S456 and S457. The segment covering 456–466 has biased composition (acidic residues); the sequence is SSTDESEEEQI. T458 is subject to Phosphothreonine. 3 positions are modified to phosphoserine: S461, S481, and S499. Disordered stretches follow at residues 1157 to 1190, 1202 to 1231, and 1244 to 1274; these read CHSDPPNPHLIIPTPEGFSTRSMPSDARSHGSPA, ASRPSPSGGDSVLPKSISSAHDTRGSSVPE, and FRSLSRHSSPTEERDEPAYPRGDSSGSTRRS. Residues 1217–1230 are compositionally biased toward polar residues; sequence SISSAHDTRGSSVP. 2 positions are modified to phosphoserine: S1252 and S1274. Residues 1252–1261 show a composition bias toward basic and acidic residues; sequence SPTEERDEPA. The 259-residue stretch at 1343–1601 folds into the Protein kinase domain; the sequence is WQRGNKIGEG…ASQLLDHSFV (259 aa). ATP contacts are provided by residues 1349-1357 and K1372; that span reads IGEGQYGKV. The active-site Proton acceptor is the D1463.

This sequence belongs to the protein kinase superfamily. STE Ser/Thr protein kinase family. MAP kinase kinase kinase subfamily. Monomer and homodimer. Homodimerization enhances kinase activity. Interacts with TRAF4; this promotes homodimerization. Binds both upstream activators and downstream substrates in multimolecular complexes. Interacts with AXIN1 and DIXDC1; interaction with DIXDC1 prevents interaction with AXIN1. Interacts with GADD45 and MAP2K6. Interacts with ZFP36; this interaction enhances the association with SH3KBP1/CIN85. Interacts with SH3KBP1; this interaction enhances the association with ZFP36. Interacts with CDC42. Requires Mg(2+) as cofactor. As to expression, expressed at high levels in heart, placenta, skeletal muscle and pancreas, and at lower levels in other tissues.

It localises to the cytoplasm. It is found in the perinuclear region. It carries out the reaction L-seryl-[protein] + ATP = O-phospho-L-seryl-[protein] + ADP + H(+). The enzyme catalyses L-threonyl-[protein] + ATP = O-phospho-L-threonyl-[protein] + ADP + H(+). With respect to regulation, N-terminal autoinhibitory domain interacts with the C-terminal kinase domain, inhibiting kinase activity, and preventing interaction with its substrate, MAP2K6. The GADD45 proteins activate the kinase by binding to the N-terminal domain. Activated by phosphorylation on Thr-1505. Functionally, component of a protein kinase signal transduction cascade. Activates the CSBP2, P38 and JNK MAPK pathways, but not the ERK pathway. Specifically phosphorylates and activates MAP2K4 and MAP2K6. The polypeptide is Mitogen-activated protein kinase kinase kinase 4 (MAP3K4) (Homo sapiens (Human)).